The primary structure comprises 271 residues: MFSIQQPLLVFSDLDGTLLDSHSYDWQPAAPWLSRLREANVPVILCSSKTSAEMLYLQKTLGLQGLPLIAENGAVIQLAEQWQDIDGFPRIISGISHGEISQVLNTLREKEHFKFTTFDDVDDATIAEWTGLSRSQAALTQLHEASVTLIWRDSDERMAQFTARLNELGLQFMQGARFWHVLDASAGKDQAANWIIATYQQLSGKRPTTLGLGDGPNDAPLLEVMDYAVIVKGLNREGVHLHDEDPTRVWRTQREGPEGWREGLDHFFSAR.

Aspartate 13 serves as the catalytic Nucleophile. Mg(2+) contacts are provided by aspartate 13, aspartate 15, and aspartate 214.

It belongs to the HAD-like hydrolase superfamily. MPGP family. Mg(2+) serves as cofactor.

It is found in the cytoplasm. It catalyses the reaction 2-O-(alpha-D-mannosyl)-3-phosphoglycerate + H2O = (2R)-2-O-(alpha-D-mannosyl)-glycerate + phosphate. This is Mannosyl-3-phosphoglycerate phosphatase from Escherichia coli O139:H28 (strain E24377A / ETEC).